A 92-amino-acid chain; its full sequence is Kappa-scoloptoxin(15)-Ssd2a (92 aa).

An N-terminal signal peptide occupies residues Met-1–Gly-20.

Contains 3 disulfide bonds. In terms of tissue distribution, expressed by the venom gland.

The protein localises to the secreted. In terms of biological role, inhibits voltage-gated potassium channels (Kv) (IC(50)=about 10 nM), when tested on DRG neurons. This is Kappa-scoloptoxin(15)-Ssd2a from Scolopendra dehaani (Thai centipede).